The chain runs to 352 residues: Ion-translocating oxidoreductase complex subunit D (352 aa).

The next 4 helical transmembrane spans lie at 20–40, 42–62, 89–109, and 123–143; these read IMLLVLLAAVPGIAAQLWFFG, GTLVQILLASVSALLAEALVL, IPPLAPWWMVVLGTVFAAIIA, and PAMIGYVVLLISFPVQMTSWL. Position 187 is an FMN phosphoryl threonine (Thr-187). 5 helical membrane passes run 214-234, 242-262, 267-287, 301-321, and 322-342; these read ILAGAGWQWVNLAWLAGGLWL, WHIPLSFLVTLALCATLGWLF, LAAPQIHLLSGATMLGAFFIL, LIFGALAGLLVWLIRSFGGYP, and DGVAFAVLLANITVPLIDYYT.

It belongs to the NqrB/RnfD family. In terms of assembly, the complex is composed of six subunits: RsxA, RsxB, RsxC, RsxD, RsxE and RsxG. Requires FMN as cofactor.

It is found in the cell inner membrane. In terms of biological role, part of a membrane-bound complex that couples electron transfer with translocation of ions across the membrane. Required to maintain the reduced state of SoxR. In Escherichia coli (strain ATCC 8739 / DSM 1576 / NBRC 3972 / NCIMB 8545 / WDCM 00012 / Crooks), this protein is Ion-translocating oxidoreductase complex subunit D.